Here is a 304-residue protein sequence, read N- to C-terminus: Hairy/enhancer-of-split related with YRPW motif protein 1 (304 aa).

The interval 1-52 (MKRAHPDYSSSDSELDETVEVEKESADENGNLSSALGSMSPTTSSQILARKR) is disordered. Residues 28-47 (ENGNLSSALGSMSPTTSSQI) are compositionally biased toward polar residues. The tract at residues 48–117 (LARKRRRGII…GGKGYFDAHA (70 aa)) is transcriptional repression and interaction with NCOR1 and SIN3A. The region spanning 49–104 (ARKRRRGIIEKRRRDRINNSLSELRRLVPSAFEKQGSAKLEKAEILQMTVDHLKML) is the bHLH domain. In terms of domain architecture, Orange spans 122–158 (YRSLGFRECLAEVARYLSIIEGLDASDPLRVRLVSHL). The tract at residues 191-234 (AHPLLLPQSGHGNTGTSASPTDPHHQGRLAAAHPEAPALRAPPS) is disordered. A compositionally biased stretch (polar residues) spans 200 to 210 (GHGNTGTSASP). Residues 218 to 234 (RLAAAHPEAPALRAPPS) show a composition bias toward low complexity.

The protein belongs to the HEY family. In terms of assembly, self-associates. Interacts with HES1 and HEYL. Interacts with HDAC1, NCOR1 and SIN3A. Interacts with GATA4 and GATA6. Interacts with CCDC89/BOIP.

It localises to the nucleus. Transcriptional repressor which binds preferentially to the canonical E box sequence 5'-CACGTG-3'. Downstream effector of Notch signaling required for cardiovascular development. Specifically required for the Notch-induced endocardial epithelial to mesenchymal transition, which is itself criticial for cardiac valve and septum development. May be required in conjunction with HEY2 to specify arterial cell fate or identity. Promotes maintenance of neuronal precursor cells and glial versus neuronal fate specification. Represses transcription by the cardiac transcriptional activators GATA4 and GATA6 and by the neuronal bHLH factors ASCL1/MASH1 and NEUROD4/MATH3. This Canis lupus familiaris (Dog) protein is Hairy/enhancer-of-split related with YRPW motif protein 1 (HEY1).